The primary structure comprises 353 residues: Ribosomal RNA small subunit methyltransferase H (353 aa).

Residues 50-52 (GGY), aspartate 69, phenylalanine 96, aspartate 117, and glutamine 124 contribute to the S-adenosyl-L-methionine site. The disordered stretch occupies residues 276-353 (AAQASRHVPG…PAPQGRGPRR (78 aa)).

Belongs to the methyltransferase superfamily. RsmH family.

It is found in the cytoplasm. The enzyme catalyses cytidine(1402) in 16S rRNA + S-adenosyl-L-methionine = N(4)-methylcytidine(1402) in 16S rRNA + S-adenosyl-L-homocysteine + H(+). Its function is as follows. Specifically methylates the N4 position of cytidine in position 1402 (C1402) of 16S rRNA. This is Ribosomal RNA small subunit methyltransferase H from Methylorubrum extorquens (strain CM4 / NCIMB 13688) (Methylobacterium extorquens).